The chain runs to 219 residues: Thiamine-phosphate synthase (219 aa).

4-amino-2-methyl-5-(diphosphooxymethyl)pyrimidine contacts are provided by residues 44–48 and Asn79; that span reads QFREK. Mg(2+) contacts are provided by Asp80 and Asp99. Ser117 lines the 4-amino-2-methyl-5-(diphosphooxymethyl)pyrimidine pocket. Residue 143–145 coordinates 2-[(2R,5Z)-2-carboxy-4-methylthiazol-5(2H)-ylidene]ethyl phosphate; that stretch reads TST. Residue Lys146 participates in 4-amino-2-methyl-5-(diphosphooxymethyl)pyrimidine binding. 2-[(2R,5Z)-2-carboxy-4-methylthiazol-5(2H)-ylidene]ethyl phosphate is bound by residues Gly175 and 195–196; that span reads IS.

The protein belongs to the thiamine-phosphate synthase family. The cofactor is Mg(2+).

The enzyme catalyses 2-[(2R,5Z)-2-carboxy-4-methylthiazol-5(2H)-ylidene]ethyl phosphate + 4-amino-2-methyl-5-(diphosphooxymethyl)pyrimidine + 2 H(+) = thiamine phosphate + CO2 + diphosphate. It carries out the reaction 2-(2-carboxy-4-methylthiazol-5-yl)ethyl phosphate + 4-amino-2-methyl-5-(diphosphooxymethyl)pyrimidine + 2 H(+) = thiamine phosphate + CO2 + diphosphate. The catalysed reaction is 4-methyl-5-(2-phosphooxyethyl)-thiazole + 4-amino-2-methyl-5-(diphosphooxymethyl)pyrimidine + H(+) = thiamine phosphate + diphosphate. The protein operates within cofactor biosynthesis; thiamine diphosphate biosynthesis; thiamine phosphate from 4-amino-2-methyl-5-diphosphomethylpyrimidine and 4-methyl-5-(2-phosphoethyl)-thiazole: step 1/1. Its function is as follows. Condenses 4-methyl-5-(beta-hydroxyethyl)thiazole monophosphate (THZ-P) and 2-methyl-4-amino-5-hydroxymethyl pyrimidine pyrophosphate (HMP-PP) to form thiamine monophosphate (TMP). This is Thiamine-phosphate synthase from Bacillus cereus (strain ATCC 14579 / DSM 31 / CCUG 7414 / JCM 2152 / NBRC 15305 / NCIMB 9373 / NCTC 2599 / NRRL B-3711).